Here is a 413-residue protein sequence, read N- to C-terminus: Probable tRNA pseudouridine synthase D (413 aa).

Asp-97 acts as the Nucleophile in catalysis. The region spanning 167–370 (AVPNYYGYQR…YGSYRRARLE (204 aa)) is the TRUD domain.

The protein belongs to the pseudouridine synthase TruD family.

The catalysed reaction is uridine(13) in tRNA = pseudouridine(13) in tRNA. In terms of biological role, could be responsible for synthesis of pseudouridine from uracil-13 in transfer RNAs. In Pyrobaculum arsenaticum (strain DSM 13514 / JCM 11321 / PZ6), this protein is Probable tRNA pseudouridine synthase D.